Here is a 326-residue protein sequence, read N- to C-terminus: Probable 9-O-acetyl-N-acetylneuraminic acid deacetylase (326 aa).

The signal sequence occupies residues 1–21 (MNAIISPDYYYVLTVAGQSNA).

The protein resides in the periplasm. Functionally, probably catalyzes the hydrolysis of the 9-O-acetyl group of 9-O-acetyl-N-acetylneuraminate (Neu5,9Ac2). Is required for growth of E.coli on Neu5,9Ac2, an alternative sialic acid commonly found in mammalian host mucosal sites, in particular in the human intestine. This is Probable 9-O-acetyl-N-acetylneuraminic acid deacetylase (nanS) from Escherichia coli (strain K12).